The chain runs to 444 residues: Acyl-CoA (8-3)-desaturase (444 aa).

An N-acetylmethionine modification is found at M1. The Cytoplasmic segment spans residues 1-121 (MAPDPVAAKT…FRELRATVEQ (121 aa)). The region spanning 17–94 (PRYFTWDEVA…MNSLLIGELS (78 aa)) is the Cytochrome b5 heme-binding domain. Residues 122-142 (MGLMKANHVFFLLYLLHILLL) form a helical membrane-spanning segment. Topologically, residues 143 to 146 (DGAA) are lumenal. A helical transmembrane segment spans residues 147 to 167 (WLTLWIFGTSFLPFLLCAVLL). At 168–267 (TAAQIQAGWL…PYNHQHKYFF (100 aa)) the chain is on the cytoplasmic side. The short motif at 179–183 (HDLGH) is the Histidine box-1 element. The Histidine box-2 motif lies at 216–220 (HFQHH). A helical transmembrane segment spans residues 268–288 (LIGPPALVPFFFQWYVFYFVI). At 289–305 (QRKKWVDLAWMITFYIR) the chain is on the lumenal side. A helical transmembrane segment spans residues 306-326 (LLLTYVPLLGLKAFLGLYFIV). Over 327–444 (RFLESNWFVW…QLWLDAYLHQ (118 aa)) the chain is Cytoplasmic. The short motif at 382–386 (QIEHH) is the Histidine box-3 element.

This sequence belongs to the fatty acid desaturase type 1 family. As to expression, widely expressed. Expressed in brain, liver and thymus (at protein level). Isoform 1 seems to be more abundant than isoform 2. Expression of isoform 2 is very low in spleen and not detectable in skeletal muscle.

Its subcellular location is the endoplasmic reticulum membrane. It is found in the mitochondrion. The catalysed reaction is (8Z,11Z,14Z)-eicosatrienoyl-CoA + 2 Fe(II)-[cytochrome b5] + O2 + 2 H(+) = (5Z,8Z,11Z,14Z)-eicosatetraenoyl-CoA + 2 Fe(III)-[cytochrome b5] + 2 H2O. It catalyses the reaction (8Z,11Z,14Z,17Z)-eicosatetraenoyl-CoA + 2 Fe(II)-[cytochrome b5] + O2 + 2 H(+) = (5Z,8Z,11Z,14Z,17Z)-eicosapentaenoyl-CoA + 2 Fe(III)-[cytochrome b5] + 2 H2O. The enzyme catalyses (11E)-octadecenoyl-CoA + 2 Fe(II)-[cytochrome b5] + O2 + 2 H(+) = (5Z,11E)-octadecadienoyl-CoA + 2 Fe(III)-[cytochrome b5] + 2 H2O. It functions in the pathway lipid metabolism; polyunsaturated fatty acid biosynthesis. Functionally, acts as a front-end fatty acyl-coenzyme A (CoA) desaturase that introduces a cis double bond at carbon 5 located between a preexisting double bond and the carboxyl end of the fatty acyl chain. Involved in biosynthesis of highly unsaturated fatty acids (HUFA) from the essential polyunsaturated fatty acids (PUFA) linoleic acid (LA) (18:2n-6) and alpha-linolenic acid (ALA) (18:3n-3) precursors. Specifically, desaturates dihomo-gamma-linoleoate (DGLA) (20:3n-6) and eicosatetraenoate (ETA) (20:4n-3) to generate arachidonate (AA) (20:4n-6) and eicosapentaenoate (EPA) (20:5n-3), respectively. As a rate limiting enzyme for DGLA (20:3n-6) and AA (20:4n-6)-derived eicosanoid biosynthesis, controls the metabolism of inflammatory lipids like prostaglandin E2, critical for efficient acute inflammatory response and maintenance of epithelium homeostasis. Contributes to membrane phospholipid biosynthesis by providing AA (20:4n-6) as a major acyl chain esterified into phospholipids. In particular, regulates phosphatidylinositol-4,5-bisphosphate levels, modulating inflammatory cytokine production in T-cells. Also desaturates (11E)-octadecenoate (trans-vaccenoate)(18:1n-9), a metabolite in the biohydrogenation pathway of LA (18:2n-6). Its function is as follows. Does not exhibit any catalytic activity toward 20:3n-6, but it may enhance FADS2 activity. In Papio anubis (Olive baboon), this protein is Acyl-CoA (8-3)-desaturase.